Here is a 199-residue protein sequence, read N- to C-terminus: 5'-deoxynucleotidase YfbR (199 aa).

Residues 18–19 and His33 contribute to the substrate site; that span reads RW. Residues 30-142 form the HD domain; sequence VSEHSLQVAM…VKQADALCAY (113 aa). Residues His33, His68, and Asp69 each contribute to the a divalent metal cation site. Residues Asp69, 77–80, and Asp137 contribute to the substrate site; that span reads DLPT. An a divalent metal cation-binding site is contributed by Asp137.

Belongs to the 5DNU family. In terms of assembly, homodimer. It depends on a divalent metal cation as a cofactor.

It is found in the cytoplasm. It carries out the reaction a 2'-deoxyribonucleoside 5'-phosphate + H2O = a 2'-deoxyribonucleoside + phosphate. Catalyzes the strictly specific dephosphorylation of 2'-deoxyribonucleoside 5'-monophosphates. This Escherichia coli (strain 55989 / EAEC) protein is 5'-deoxynucleotidase YfbR.